Here is a 69-residue protein sequence, read N- to C-terminus: Antimicrobial peptide Eval36 (69 aa).

A signal peptide spans 1–23; the sequence is MKAQFAILVISMMLLQLIVQTES. L37 is subject to Leucine amide. The propeptide occupies 38 to 69; the sequence is GKRGLRNLDDFQDFLDSDTSDADLRMLRDMFR.

The protein belongs to the non-disulfide-bridged peptide (NDBP) superfamily. Short antimicrobial peptide (group 4) family. In terms of tissue distribution, expressed by the venom gland.

The protein localises to the secreted. Functionally, probable antimicrobial peptide. Shows low inhibitory activity against herpes simplex virus type 1 (HSV-1). This Euscorpiops validus (Scorpion) protein is Antimicrobial peptide Eval36.